The sequence spans 106 residues: Urease subunit beta (106 aa).

This sequence belongs to the urease beta subunit family. In terms of assembly, heterotrimer of UreA (gamma), UreB (beta) and UreC (alpha) subunits. Three heterotrimers associate to form the active enzyme.

It is found in the cytoplasm. The enzyme catalyses urea + 2 H2O + H(+) = hydrogencarbonate + 2 NH4(+). It functions in the pathway nitrogen metabolism; urea degradation; CO(2) and NH(3) from urea (urease route): step 1/1. In Prochlorococcus marinus (strain NATL1A), this protein is Urease subunit beta.